We begin with the raw amino-acid sequence, 193 residues long: Putative zinc finger protein 726P1 (193 aa).

A C2H2-type 1; degenerate zinc finger spans residues 18-40 (YKCKKCGKTFNWSSILTNNKKIH). The segment at 46–68 (YKCEECGKAFKQHSTLTTHKIIC) adopts a C2H2-type 2; atypical zinc-finger fold. The C2H2-type 3; degenerate zinc finger occupies 74 to 96 (YRCEECGKAFCQPSTLTRYKRMH). A C2H2-type 4 zinc finger spans residues 102-124 (YKCEECGKAFTQFSTLTKHKRIH). The C2H2-type 5; degenerate zinc finger occupies 130–152 (YKCEESGKAFIWSSGLTEHRRVH). The C2H2-type 6 zinc finger occupies 158–180 (YKCEECGKALIQFSTLTRHKRIH).

The sequence is that of Putative zinc finger protein 726P1 (ZNF726P1) from Homo sapiens (Human).